The chain runs to 183 residues: Anterior gradient protein 1 (183 aa).

Residues 1 to 18 form the signal peptide; the sequence is MQAGLSLVCLVLLCSALG.

It belongs to the AGR family. From stage 18 (neurula) onward, expressed in the cement gland until it degenerates. More weakly expressed in the adjacent hatching gland.

The protein localises to the secreted. Functionally, does not appear to be required for cement gland formation. This chain is Anterior gradient protein 1 (ag1), found in Xenopus laevis (African clawed frog).